Consider the following 396-residue polypeptide: Acetate kinase (396 aa).

Asn-7 is a Mg(2+) binding site. Residue Lys-14 coordinates ATP. Arg-91 provides a ligand contact to substrate. Asp-148 functions as the Proton donor/acceptor in the catalytic mechanism. ATP-binding positions include 208–212, 283–285, and 331–335; these read HLGNG, DFR, and GIGEN. Glu-384 provides a ligand contact to Mg(2+).

This sequence belongs to the acetokinase family. Homodimer. Requires Mg(2+) as cofactor. The cofactor is Mn(2+).

Its subcellular location is the cytoplasm. The enzyme catalyses acetate + ATP = acetyl phosphate + ADP. It functions in the pathway metabolic intermediate biosynthesis; acetyl-CoA biosynthesis; acetyl-CoA from acetate: step 1/2. Its function is as follows. Catalyzes the formation of acetyl phosphate from acetate and ATP. Can also catalyze the reverse reaction. The protein is Acetate kinase of Desulforamulus reducens (strain ATCC BAA-1160 / DSM 100696 / MI-1) (Desulfotomaculum reducens).